The sequence spans 306 residues: Ornithine carbamoyltransferase (306 aa).

Residues 51–54 (STRT), Q78, R102, and 129–132 (HPCQ) each bind carbamoyl phosphate. Residues N160, D223, and 227–228 (SM) contribute to the L-ornithine site. Carbamoyl phosphate contacts are provided by residues 263 to 264 (CL) and R291.

It belongs to the aspartate/ornithine carbamoyltransferase superfamily. OTCase family.

It is found in the cytoplasm. The catalysed reaction is carbamoyl phosphate + L-ornithine = L-citrulline + phosphate + H(+). It functions in the pathway amino-acid biosynthesis; L-arginine biosynthesis; L-arginine from L-ornithine and carbamoyl phosphate: step 1/3. Reversibly catalyzes the transfer of the carbamoyl group from carbamoyl phosphate (CP) to the N(epsilon) atom of ornithine (ORN) to produce L-citrulline. The protein is Ornithine carbamoyltransferase of Nostoc sp. (strain PCC 7120 / SAG 25.82 / UTEX 2576).